Consider the following 87-residue polypeptide: Cell division topological specificity factor (87 aa).

The protein belongs to the MinE family.

Functionally, prevents the cell division inhibition by proteins MinC and MinD at internal division sites while permitting inhibition at polar sites. This ensures cell division at the proper site by restricting the formation of a division septum at the midpoint of the long axis of the cell. This Herpetosiphon aurantiacus (strain ATCC 23779 / DSM 785 / 114-95) protein is Cell division topological specificity factor.